Reading from the N-terminus, the 205-residue chain is GTP cyclohydrolase-2 (205 aa).

49–53 (RVHSE) is a GTP binding site. 3 residues coordinate Zn(2+): cysteine 54, cysteine 65, and cysteine 67. Residues glutamine 70, 92 to 94 (EGR), and threonine 114 each bind GTP. Aspartate 126 (proton acceptor) is an active-site residue. Arginine 128 functions as the Nucleophile in the catalytic mechanism. GTP contacts are provided by threonine 149 and lysine 154.

The protein belongs to the GTP cyclohydrolase II family. The cofactor is Zn(2+).

It carries out the reaction GTP + 4 H2O = 2,5-diamino-6-hydroxy-4-(5-phosphoribosylamino)-pyrimidine + formate + 2 phosphate + 3 H(+). Its pathway is cofactor biosynthesis; riboflavin biosynthesis; 5-amino-6-(D-ribitylamino)uracil from GTP: step 1/4. Catalyzes the conversion of GTP to 2,5-diamino-6-ribosylamino-4(3H)-pyrimidinone 5'-phosphate (DARP), formate and pyrophosphate. In Pseudomonas fluorescens (strain SBW25), this protein is GTP cyclohydrolase-2.